Reading from the N-terminus, the 232-residue chain is A-type ATP synthase subunit D (232 aa).

Residues 200-232 (KKIKNKKEAEEEDEDEDESEMTDETVVQTPADD) are disordered. The span at 209–222 (EEEDEDEDESEMTD) shows a compositional bias: acidic residues.

It belongs to the V-ATPase D subunit family. Has multiple subunits with at least A(3), B(3), C, D, E, F, H, I and proteolipid K(x).

The protein resides in the cell membrane. In terms of biological role, component of the A-type ATP synthase that produces ATP from ADP in the presence of a proton gradient across the membrane. The polypeptide is A-type ATP synthase subunit D (Haloquadratum walsbyi (strain DSM 16790 / HBSQ001)).